Consider the following 221-residue polypeptide: Serine/arginine-rich splicing factor 2 (221 aa).

An N-acetylserine modification is found at Ser2. At Ser2 the chain carries Phosphoserine. Positions 14 to 92 (TSLKVDNLTY…RELRVQMARY (79 aa)) constitute an RRM domain. A phosphothreonine mark is found at Thr22 and Thr25. Position 26 is a phosphoserine (Ser26). Lys52 is subject to N6-acetyllysine. Residues 92-221 (YGRPPDSHHS…SPEEEGAVSS (130 aa)) are disordered. Basic residues-rich tracts occupy residues 117–171 (RRSR…RSKS) and 179–189 (SRSRSRSRSRS). Residues Ser189, Ser191, Ser204, Ser206, Ser208, Ser212, and Ser220 each carry the phosphoserine modification. Residues 212-221 (SPEEEGAVSS) show a composition bias toward acidic residues.

The protein belongs to the splicing factor SR family. As to quaternary structure, in vitro, self-associates and binds SRSF1/SFRS1 (ASF/SF2), SNRP70 and U2AF1 but not U2AF2. Binds SREK1/SFRS12. Interacts with CCNL1 and CCNL2. Interacts with SCAF11. Interacts with ZRSR2/U2AF1-RS2. Interacts with CCDC55 (via C-terminus). Interacts with BRDT. In terms of processing, extensively phosphorylated on serine residues in the RS domain. Phosphorylated by SRPK2 and this causes its redistribution from the nuclear speckle to nucleoplasm and controls cell fate decision in response to cisplatin treatment. KAT5/TIP60 inhibits its phosphorylation by preventing SRPK2 nuclear translocation. Post-translationally, acetylation on Lys-52 by KAT5/TIP60 promotes its proteasomal degradation. This effect is counterbalanced by HDAC6, which positively controls SRSF2 protein level by deacetylating it and preventing its proteasomal degradation.

Its subcellular location is the nucleus. It is found in the nucleoplasm. The protein resides in the nucleus speckle. Its function is as follows. Necessary for the splicing of pre-mRNA. It is required for formation of the earliest ATP-dependent splicing complex and interacts with spliceosomal components bound to both the 5'- and 3'-splice sites during spliceosome assembly. It also is required for ATP-dependent interactions of both U1 and U2 snRNPs with pre-mRNA. Interacts with other spliceosomal components, via the RS domains, to form a bridge between the 5'- and 3'-splice site binding components, U1 snRNP and U2AF. Binds to purine-rich RNA sequences, either 5'-AGSAGAGTA-3' (S=C or G) or 5'-GTTCGAGTA-3'. Can bind to beta-globin mRNA and commit it to the splicing pathway. The phosphorylated form (by SRPK2) is required for cellular apoptosis in response to cisplatin treatment. This chain is Serine/arginine-rich splicing factor 2 (SRSF2), found in Pan troglodytes (Chimpanzee).